We begin with the raw amino-acid sequence, 469 residues long: Gustatory receptor for sugar taste 64f (469 aa).

Residues 1–117 are Cytoplasmic-facing; it reads MKILPKLERK…SFSWRNIRTC (117 aa). The chain crosses the membrane as a helical span at residues 118–138; the sequence is FSLLFIASSLANFGLSLFKVL. Residues 139–146 lie on the Extracellular side of the membrane; the sequence is NNPISFNS. Residues 147 to 167 traverse the membrane as a helical segment; it reads IKPIIFRGSVLLVLIVALNLA. Topologically, residues 168–199 are cytoplasmic; it reads RQWPQLMMYWHTVEKDLPQYKTQLTKWKMGHT. The chain crosses the membrane as a helical span at residues 200-220; that stretch reads ISMVMLLGMMLSFAEHILSMV. The Extracellular portion of the chain corresponds to 221–265; the sequence is SAINYASFCNRTADPIQNYFLRTNDEIFFVTSYSTTLALWGKFQN. N230 is a glycosylation site (N-linked (GlcNAc...) asparagine). A helical transmembrane segment spans residues 266–286; it reads VFSTFIWNYMDLFVMIVSIGL. Over 287-330 the chain is Cytoplasmic; sequence ASKFRQLNDDLRNFKGMNMAPSYWSERRIQYRNICILCDKMDDA. A helical transmembrane segment spans residues 331–351; it reads ISLITMVSFSNNLYFICVQLL. Residues 352–353 lie on the Extracellular side of the membrane; that stretch reads RS. Residues 354–374 traverse the membrane as a helical segment; the sequence is LNTMPSVAHAVYFYFSLIFLI. The Cytoplasmic segment spans residues 375 to 435; that stretch reads GRTLAVSLYS…GMKFFHLTRK (61 aa). A helical membrane pass occupies residues 436 to 456; that stretch reads LVLSVAGTIVTYELVLIQFHE. At 457–469 the chain is on the extracellular side; the sequence is DNDLWDCDQSYYS.

This sequence belongs to the insect chemoreceptor superfamily. Gustatory receptor (GR) family. Gr5a subfamily. In terms of tissue distribution, expressed in Gr5a-expressing sugar-sensing cells.

The protein resides in the cell membrane. In terms of biological role, one of the few identified sugar gustatory receptors identified so far and which promotes the starvation-induced increase of feeding motivation. Required in combination with Gr64a to detect sucrose, maltose, and glucose. The chain is Gustatory receptor for sugar taste 64f (Gr64f) from Drosophila melanogaster (Fruit fly).